We begin with the raw amino-acid sequence, 128 residues long: Large ribosomal subunit protein eL22 (128 aa).

This sequence belongs to the eukaryotic ribosomal protein eL22 family. In terms of assembly, component of the large ribosomal subunit.

It localises to the cytoplasm. Its function is as follows. Component of the large ribosomal subunit. The ribosome is a large ribonucleoprotein complex responsible for the synthesis of proteins in the cell. The chain is Large ribosomal subunit protein eL22 (RPL22) from Gallus gallus (Chicken).